Reading from the N-terminus, the 833-residue chain is MTDTRRRVKVYTLNEDRQWDDRGTGHVSSGYVERLKGMSLLVRAESDGSLLLESKINPNTAYQKQQDTLIVWSEAENYDLALSFQEKAGCDEIWEKICQVQGKDPSVDITQDLVDESEEERFDDMSSPGLELPSCELSRLEEIAELVASSLPSPLRREKLALALENEGYIKKLLELFHVCEDLENIEGLHHLYEIIKGIFLLNRTALFEVMFSEECIMDVIGCLEYDPALSQPRKHREFLTKTAKFKEVIPISDPELKQKIHQTYRVQYIQDMVLPTPSVFEENMLSTLHSFIFFNKVEIVGMLQEDEKFLTDLFAQLTDEATDEEKRQELVNFLKEFCAFSQTLQPQNRDAFFKTLSNMGILPALEVILGMDDTQVRSAATDIFSYLVEYNPSMVREFVMQEAQQNDDVSKKLTEQKITSKDILLINLIIEHMICDTDPELGGAVQLMGLLRTLVDPENMLATANKTEKTEFLGFFYKHCMHVLTAPLLANTTEDKPSKDDFQTAQLLALVLELLTFCVEHHTYHIKNYIINKDILRRVLVLMASKHAFLALCALRFKRKIIGLKDEFYNRYIMKSFLFEPVVKAFLNNGSRYNLMNSAIIEMFEFIRVEDIKSLTAHVIENYWKALEDVDYVQTFKGLKLRFEQQRERQDNPKLDSMRSILRNHRYRRDARTLEDEEEMWFNTDEDDMEDGEAVVSPSDKTKNDDDIMDPISKFMERKKLKESEEKEVLLKTNLSGRQSPSFKLSLSSGTKTNLTSQSSTTNLPGSPGSPGSPGSPGSPGSVPKNTSQTAAITTKGGLVGLVDYPDDDEDDDEDEDKEDTLPLSKKAKFDS.

Residues M1 to V100 enclose the WH1 domain. A phosphoserine mark is found at S117 and S127. K655 carries the N6-acetyllysine modification. Acidic residues predominate over residues F683–E694. Disordered regions lie at residues F683 to P712 and K733 to S833. Phosphoserine is present on residues S698, S741, S768, S771, S774, S777, and S780. Positions T734 to G751 are enriched in polar residues. The span at T752–S768 shows a compositional bias: low complexity. Positions P785–I794 are enriched in polar residues. Positions Y806–E820 are enriched in acidic residues.

This sequence belongs to the SMEK family. As to quaternary structure, serine/threonine-protein phosphatase 4 (PP4) occurs in different assemblies of the catalytic and one or more regulatory subunits. Component of the PP4 complex PPP4C-PPP4R2-PPP4R3A. Interacts with PPP4C; the interaction requires PPP4R2.

It is found in the cytoplasm. Its subcellular location is the cytoskeleton. It localises to the microtubule organizing center. The protein localises to the centrosome. The protein resides in the nucleus. Functionally, regulatory subunit of serine/threonine-protein phosphatase 4. May regulate the activity of PPP4C at centrosomal microtubule organizing centers. The PPP4C-PPP4R2-PPP4R3A PP4 complex specifically dephosphorylates H2AX phosphorylated on 'Ser-140' (gamma-H2AX) generated during DNA replication and required for DNA DSB repair. The sequence is that of Serine/threonine-protein phosphatase 4 regulatory subunit 3A from Homo sapiens (Human).